The primary structure comprises 243 residues: MLIIAGLGNPGGKYAGNRHNIGFMAVDAIHRRHSFSPWSKKFRAEIAEGELGGEKVLLIKPQTFMNLSGEAVGEAMRFYKLQPADLVAIYDELDLPAGKARLKTGGGHGGHNGIKSLDAHCGKEYRRLRLGIGHPGIKEMVQNHVLGDFAKADKAWLEPLLDTLADNADMLVRNEDSQLMNKIALALGGKAEEEKPRKDNKTTEKKPAGQSHIHQARNHNQPKVLTTGPMADILKKMFGNKGE.

Position 14 (tyrosine 14) interacts with tRNA. Histidine 19 functions as the Proton acceptor in the catalytic mechanism. TRNA is bound by residues phenylalanine 64, asparagine 66, and asparagine 112. Residues 188–243 (GGKAEEEKPRKDNKTTEKKPAGQSHIHQARNHNQPKVLTTGPMADILKKMFGNKGE) form a disordered region. Residues 190 to 207 (KAEEEKPRKDNKTTEKKP) show a composition bias toward basic and acidic residues.

Belongs to the PTH family. Monomer.

It localises to the cytoplasm. It carries out the reaction an N-acyl-L-alpha-aminoacyl-tRNA + H2O = an N-acyl-L-amino acid + a tRNA + H(+). Functionally, hydrolyzes ribosome-free peptidyl-tRNAs (with 1 or more amino acids incorporated), which drop off the ribosome during protein synthesis, or as a result of ribosome stalling. Its function is as follows. Catalyzes the release of premature peptidyl moieties from peptidyl-tRNA molecules trapped in stalled 50S ribosomal subunits, and thus maintains levels of free tRNAs and 50S ribosomes. This is Peptidyl-tRNA hydrolase from Rhizobium leguminosarum bv. trifolii (strain WSM2304).